The following is a 460-amino-acid chain: Chromosomal replication initiator protein DnaA 2 (460 aa).

Residues 1 to 68 form a domain I, interacts with DnaA modulators region; the sequence is MRAWEDFLLL…KTSLVNNNGK (68 aa). The interval 68-102 is domain II; it reads KLIRVHITSLDKTAPFYKEKQIQQEKTAYFTMQYG. A domain III, AAA+ region region spans residues 103–321; that stretch reads NVNPEMTFGN…DALKLLSKRV (219 aa). 4 residues coordinate ATP: Gly-151, Gly-153, Lys-154, and Thr-155. Positions 322–460 are domain IV, binds dsDNA; sequence AYKKLAQQLL…EFFPEEEISC (139 aa).

The protein belongs to the DnaA family. In terms of assembly, oligomerizes as a right-handed, spiral filament on DNA at oriC.

The protein resides in the cytoplasm. Functionally, plays an essential role in the initiation and regulation of chromosomal replication. ATP-DnaA binds to the origin of replication (oriC) to initiate formation of the DNA replication initiation complex once per cell cycle. Binds the DnaA box (a 9 base pair repeat at the origin) and separates the double-stranded (ds)DNA. Forms a right-handed helical filament on oriC DNA; dsDNA binds to the exterior of the filament while single-stranded (ss)DNA is stabiized in the filament's interior. The ATP-DnaA-oriC complex binds and stabilizes one strand of the AT-rich DNA unwinding element (DUE), permitting loading of DNA polymerase. After initiation quickly degrades to an ADP-DnaA complex that is not apt for DNA replication. Binds acidic phospholipids. The chain is Chromosomal replication initiator protein DnaA 2 from Chlamydia caviae (strain ATCC VR-813 / DSM 19441 / 03DC25 / GPIC) (Chlamydophila caviae).